A 368-amino-acid polypeptide reads, in one-letter code: Ribulose bisphosphate carboxylase-like protein 1 (368 aa).

The protein belongs to the RuBisCO large chain family. Type IV subfamily.

In terms of biological role, unknown. Probably does not have RuBisCO activity. The protein is Ribulose bisphosphate carboxylase-like protein 1 (rlp1) of Rhodopseudomonas palustris (strain ATCC BAA-98 / CGA009).